Here is a 158-residue protein sequence, read N- to C-terminus: Ribosome maturation factor RimP (158 aa).

The protein belongs to the RimP family.

It is found in the cytoplasm. Its function is as follows. Required for maturation of 30S ribosomal subunits. The sequence is that of Ribosome maturation factor RimP from Deinococcus radiodurans (strain ATCC 13939 / DSM 20539 / JCM 16871 / CCUG 27074 / LMG 4051 / NBRC 15346 / NCIMB 9279 / VKM B-1422 / R1).